Reading from the N-terminus, the 158-residue chain is Putative gene 52 protein (158 aa).

The sequence is that of Putative gene 52 protein (52) from Bacillus subtilis (Bacteriophage SP01).